Consider the following 325-residue polypeptide: MASSSPCQIFLVFVMVTLVTSLIPSNALLTPHFYDNVCPQALPTIKSVVLHAILREKRIGASLLRLHFHDCFVNGCDGSVLLDDTPNFTGEKTALPNINSIRGFSVVDEIKAAVDKVCKGPVVSCADILATAARDSVAILGGPQFFYNVLLGRRDARTASKAAANANLPSPTFNFSQLISNFKSQGLNVKDLVALSGGHTIGFARCTTFRNRIYNETNIDPIFAASLRKTCPRNGGDNNLTPLDFTPTRVENTYYRDLLYKRGVLHSDQQLFKGQGSESDKLVQLYSKNTFAFASDFKTSLIKMGNIKPLTGRQGEIRLNCRRVR.

Residues 1–21 form the signal peptide; the sequence is MASSSPCQIFLVFVMVTLVTS. 4 disulfides stabilise this stretch: C38–C118, C71–C76, C125–C321, and C206–C231. H69 acts as the Proton acceptor in catalysis. Ca(2+) contacts are provided by D70, V73, G75, D77, and S79. The N-linked (GlcNAc...) asparagine glycan is linked to N87. P169 is a binding site for substrate. An N-linked (GlcNAc...) asparagine glycan is attached at N174. H199 lines the heme b pocket. Residue T200 participates in Ca(2+) binding. N215 carries an N-linked (GlcNAc...) asparagine glycan. D244, T246, and E251 together coordinate Ca(2+).

Belongs to the peroxidase family. Classical plant (class III) peroxidase subfamily. Heme b serves as cofactor. It depends on Ca(2+) as a cofactor. As to expression, expressed in the differentiating root epidermis following inoculation with the bacterial symbiont Sinorhizobium meliloti.

The protein resides in the secreted. It carries out the reaction 2 a phenolic donor + H2O2 = 2 a phenolic radical donor + 2 H2O. Functionally, removal of H(2)O(2), oxidation of toxic reductants, biosynthesis and degradation of lignin, suberization, auxin catabolism, response to environmental stresses such as wounding, pathogen attack and oxidative stress. These functions might be dependent on each isozyme/isoform in each plant tissue. The sequence is that of Peroxidase RIP1 from Medicago truncatula (Barrel medic).